Consider the following 747-residue polypeptide: Histone-lysine N-methyltransferase EZH1 (747 aa).

Positions aspartate 188–phenylalanine 231 are disordered. Over residues histidine 194–valine 211 the composition is skewed to basic and acidic residues. Lysine 327 participates in a covalent cross-link: Glycyl lysine isopeptide (Lys-Gly) (interchain with G-Cter in SUMO2). The disordered stretch occupies residues valine 368–lysine 414. A compositionally biased stretch (low complexity) spans serine 369 to alanine 381. Basic and acidic residues predominate over residues glutamate 382 to glycine 393. A compositionally biased stretch (polar residues) spans aspartate 395–lysine 414. A Nuclear localization signal motif is present at residues glutamine 491 to lysine 496. Residues cysteine 504–serine 606 form the CXC domain. The SET domain occupies lysine 613–arginine 728.

This sequence belongs to the class V-like SAM-binding methyltransferase superfamily. Histone-lysine methyltransferase family. EZ subfamily. Component of the PRC2/EED-EZH1 complex, which includes EED, EZH1, SUZ12, RBBP4 and AEBP2. The PRC2/EED-EZH1 is less abundant than the PRC2/EED-EZH2 complex, has weak methyltransferase activity and compacts chromatin in the absence of the methyltransferase cofactor S-adenosyl-L-methionine (SAM). Interacts with EZHIP; the interaction blocks EZH1 methyltransferase activity. As to expression, expressed at high levels in kidney, adrenal gland, testis and brain.

The protein localises to the nucleus. The enzyme catalyses L-lysyl(27)-[histone H3] + 3 S-adenosyl-L-methionine = N(6),N(6),N(6)-trimethyl-L-lysyl(27)-[histone H3] + 3 S-adenosyl-L-homocysteine + 3 H(+). Its function is as follows. Polycomb group (PcG) protein. Catalytic subunit of the PRC2/EED-EZH1 complex, which methylates 'Lys-27' of histone H3, leading to transcriptional repression of the affected target gene. Able to mono-, di- and trimethylate 'Lys-27' of histone H3 to form H3K27me1, H3K27me2 and H3K27me3, respectively. Required for embryonic stem cell derivation and self-renewal, suggesting that it is involved in safeguarding embryonic stem cell identity. Compared to EZH2-containing complexes, it is less abundant in embryonic stem cells, has weak methyltransferase activity and plays a less critical role in forming H3K27me3, which is required for embryonic stem cell identity and proper differentiation. The sequence is that of Histone-lysine N-methyltransferase EZH1 (Ezh1) from Mus musculus (Mouse).